A 154-amino-acid chain; its full sequence is Ubiquitin-conjugating enzyme E2 L5 (154 aa).

The UBC core domain maps to 2 to 149 (AASRRLMKEL…AEEFTKKYGE (148 aa)). Cys86 (glycyl thioester intermediate) is an active-site residue.

Belongs to the ubiquitin-conjugating enzyme family.

It catalyses the reaction S-ubiquitinyl-[E1 ubiquitin-activating enzyme]-L-cysteine + [E2 ubiquitin-conjugating enzyme]-L-cysteine = [E1 ubiquitin-activating enzyme]-L-cysteine + S-ubiquitinyl-[E2 ubiquitin-conjugating enzyme]-L-cysteine.. It participates in protein modification; protein ubiquitination. Its function is as follows. Catalyzes the covalent attachment of ubiquitin to other proteins. The sequence is that of Ubiquitin-conjugating enzyme E2 L5 from Homo sapiens (Human).